Here is a 446-residue protein sequence, read N- to C-terminus: Branched-chain amino acid permease BrnQ (446 aa).

A run of 12 helical transmembrane segments spans residues 13–33, 41–61, 81–101, 120–140, 154–174, 196–216, 237–257, 285–305, 325–345, 347–367, 381–401, and 421–441; these read ISSM…PAYL, LWIS…LAIA, KYSY…FAIP, MAKS…MLFF, FLTP…LLHP, VLAG…IIVI, TGVL…LVGA, GAVI…IGLI, WAII…TTII, FSLP…LLAL, IMTA…LPAG, and GLGW…KGVI.

The protein belongs to the branched chain amino acid transporter family.

The protein resides in the cell membrane. With respect to regulation, leucine uptake is inhibited by the proton ionophore carbonyl cyanide m-chlorophenylhydrazone (CCCP). Branched chain amino acid transport system which is involved in the uptake of leucine, valine and isoleucine. The proton motive force is probably the driving force for transport. The protein is Branched-chain amino acid permease BrnQ of Lactobacillus delbrueckii subsp. lactis.